A 147-amino-acid chain; its full sequence is Myoglobin (147 aa).

The 140-residue stretch at 2-141 folds into the Globin domain; the sequence is ADFDAVLKCW…VIADLEANYK (140 aa). His-60 lines the nitrite pocket. His-60 provides a ligand contact to O2. A heme b-binding site is contributed by His-89.

Belongs to the globin family. In terms of assembly, monomeric.

It localises to the cytoplasm. Its subcellular location is the sarcoplasm. It catalyses the reaction Fe(III)-heme b-[protein] + nitric oxide + H2O = Fe(II)-heme b-[protein] + nitrite + 2 H(+). It carries out the reaction H2O2 + AH2 = A + 2 H2O. In terms of biological role, monomeric heme protein which primary function is to store oxygen and facilitate its diffusion within muscle tissues. Reversibly binds oxygen through a pentacoordinated heme iron and enables its timely and efficient release as needed during periods of heightened demand. Depending on the oxidative conditions of tissues and cells, and in addition to its ability to bind oxygen, it also has a nitrite reductase activity whereby it regulates the production of bioactive nitric oxide. Under stress conditions, like hypoxia and anoxia, it also protects cells against reactive oxygen species thanks to its pseudoperoxidase activity. This chain is Myoglobin (mb), found in Auxis rochei (Bullet tuna).